We begin with the raw amino-acid sequence, 543 residues long: Chaperonin GroEL 2 (543 aa).

Residues 29 to 32, 86 to 90, G413, 479 to 481, and D495 contribute to the ATP site; these read TLGP, DGTTT, and NAA.

The protein belongs to the chaperonin (HSP60) family. Forms a cylinder of 14 subunits composed of two heptameric rings stacked back-to-back. Interacts with the co-chaperonin GroES.

Its subcellular location is the cytoplasm. It carries out the reaction ATP + H2O + a folded polypeptide = ADP + phosphate + an unfolded polypeptide.. Functionally, together with its co-chaperonin GroES, plays an essential role in assisting protein folding. The GroEL-GroES system forms a nano-cage that allows encapsulation of the non-native substrate proteins and provides a physical environment optimized to promote and accelerate protein folding. This is Chaperonin GroEL 2 from Prochlorococcus marinus (strain NATL1A).